A 365-amino-acid chain; its full sequence is Ferrochelatase (365 aa).

His-211 and Glu-292 together coordinate Fe cation.

Belongs to the ferrochelatase family.

The protein localises to the cytoplasm. It carries out the reaction heme b + 2 H(+) = protoporphyrin IX + Fe(2+). Its pathway is porphyrin-containing compound metabolism; protoheme biosynthesis; protoheme from protoporphyrin-IX: step 1/1. Catalyzes the ferrous insertion into protoporphyrin IX. The sequence is that of Ferrochelatase from Aromatoleum aromaticum (strain DSM 19018 / LMG 30748 / EbN1) (Azoarcus sp. (strain EbN1)).